The sequence spans 184 residues: Dirigent protein 14 (184 aa).

Positions 1–20 (MANQIYLFSLICLSVLLCQS) are cleaved as a signal peptide. A disulfide bridge connects residues Cys-36 and Cys-182. Residues Asn-55 and Asn-119 are each glycosylated (N-linked (GlcNAc...) asparagine).

It belongs to the plant dirigent protein family. In terms of assembly, homodimer.

The protein resides in the secreted. It is found in the extracellular space. The protein localises to the apoplast. Functionally, dirigent proteins impart stereoselectivity on the phenoxy radical-coupling reaction, yielding optically active lignans from two molecules of coniferyl alcohol in the biosynthesis of lignans, flavonolignans, and alkaloids and thus plays a central role in plant secondary metabolism. This Arabidopsis thaliana (Mouse-ear cress) protein is Dirigent protein 14 (DIR14).